The chain runs to 526 residues: GMP synthase [glutamine-hydrolyzing] (526 aa).

A Glutamine amidotransferase type-1 domain is found at 4-202 (KILILDFGSQ…VHDICGCDQS (199 aa)). The Nucleophile role is filled by cysteine 81. Residues histidine 176 and glutamate 178 contribute to the active site. One can recognise a GMPS ATP-PPase domain in the interval 203–395 (WNMPDYVETA…LGLPHDMVYR (193 aa)). 230–236 (SGGVDSS) is a binding site for ATP.

In terms of assembly, homodimer.

The enzyme catalyses XMP + L-glutamine + ATP + H2O = GMP + L-glutamate + AMP + diphosphate + 2 H(+). Its pathway is purine metabolism; GMP biosynthesis; GMP from XMP (L-Gln route): step 1/1. Functionally, catalyzes the synthesis of GMP from XMP. The chain is GMP synthase [glutamine-hydrolyzing] from Methylobacillus flagellatus (strain ATCC 51484 / DSM 6875 / VKM B-1610 / KT).